Reading from the N-terminus, the 271-residue chain is DNA repair protein RecO (271 aa).

Over residues 249 to 264 the composition is skewed to basic and acidic residues; sequence VRVEDSVRQDGDRDST. Positions 249–271 are disordered; that stretch reads VRVEDSVRQDGDRDSTTRTSSPA.

This sequence belongs to the RecO family.

Functionally, involved in DNA repair and RecF pathway recombination. The polypeptide is DNA repair protein RecO (Rhodococcus jostii (strain RHA1)).